A 607-amino-acid polypeptide reads, in one-letter code: MNLEDLKKRQEKIRNFSIIAHIDHGKSTLADRILEATETVSSREMQAQLLDSMDLERERGITIKLNAIELNYTAKDGETYIFHLIDTPGHVDFTYEVSRSLAACEGAILVVDAAQGIEAQTLANVYLALDNDLEILPVINKIDLPAADPERVRAEIEDVIGLDASEAVLASAKAGIGIEDILEQIVEKVPAPTGNVEAPLKALIFDSVYDAYRGVILQVRVMDGVVKPGDTIQLMSNGKTFDVTEVGIFTPKAIGRDFLATGDVGYIAASIKTVQDTRVGDTVTLADNPATEPLHGYKQMNPMVFAGLYPIESNKYNDLREALEKLQLNDASLQFEPETSQALGFGFRCGFLGLLHMDVIQERLEREFNIDLIMTAPSVIYKVNLTDGEAIDVSNPSEFPDPTKIDSIEEPYVKAQIMVPQEFVGAVMELAQRKRGDFVTMDYIDDNRVNVIYQIPLAEIVFDFFDKLKSSTRGYASFDYEISEYRSSKLVKMDILLNGDKVDALSFIVHKEFAYERGKLIVDKLKKIIPRQQFEVPIQAAIGQKIVARTDIKALRKNVLAKCYGGDVSRKRKLLEKQKAGKKRMKAIGSVEVPQEAFLSVLSMDEE.

The tr-type G domain maps to 11–193 (EKIRNFSIIA…QIVEKVPAPT (183 aa)). Residues 23–28 (DHGKST) and 140–143 (NKID) each bind GTP.

It belongs to the TRAFAC class translation factor GTPase superfamily. Classic translation factor GTPase family. LepA subfamily.

The protein resides in the cell membrane. It carries out the reaction GTP + H2O = GDP + phosphate + H(+). Required for accurate and efficient protein synthesis under certain stress conditions. May act as a fidelity factor of the translation reaction, by catalyzing a one-codon backward translocation of tRNAs on improperly translocated ribosomes. Back-translocation proceeds from a post-translocation (POST) complex to a pre-translocation (PRE) complex, thus giving elongation factor G a second chance to translocate the tRNAs correctly. Binds to ribosomes in a GTP-dependent manner. The sequence is that of Elongation factor 4 from Streptococcus gordonii (strain Challis / ATCC 35105 / BCRC 15272 / CH1 / DL1 / V288).